The primary structure comprises 151 residues: UPF0208 membrane protein YfbV (151 aa).

Topologically, residues 1–45 (MSTPDNRSVNFFSLFCRGQHYSKTWPLEKRLAPVFVENRVIKMTR) are cytoplasmic. Residues 46–65 (YAIRFMPPIAVFTLCWQIAL) form a helical membrane-spanning segment. At 66-68 (GGQ) the chain is on the periplasmic side. Residues 69 to 91 (LGPAVATALFALSLPMQGLWWLG) traverse the membrane as a helical segment. The Cytoplasmic portion of the chain corresponds to 92–151 (KRSVTPLPPAILNWFYEVRGKLQESGQVLAPVEGKPDYQALADTLKRAFKQLDKTFLDDL).

Belongs to the UPF0208 family.

The protein resides in the cell inner membrane. The sequence is that of UPF0208 membrane protein YfbV (yfbV) from Escherichia coli O6:H1 (strain CFT073 / ATCC 700928 / UPEC).